The primary structure comprises 211 residues: MVAKAKTTKAKVELPPFEYPQGYQLIAGVDEVGRGPLVGDVVTAAVILDPNNPIEGLNDSKKLSEKKRLALLPEIKEKALAWAVGRCSPEEIDELNILQATMVAMQRAITGLKVQPDLALIDGNRCPELPMDSQAVVKGDLRVAEISAASIIAKVVRDQEMEELDKQYPQFGFAKHKGYPTKAHFEAIEQHGVISEHRKSFKPVKKALGLD.

One can recognise an RNase H type-2 domain in the interval 24–211 (QLIAGVDEVG…KPVKKALGLD (188 aa)). The a divalent metal cation site is built by D30, E31, and D122.

It belongs to the RNase HII family. Requires Mn(2+) as cofactor. It depends on Mg(2+) as a cofactor.

It localises to the cytoplasm. It catalyses the reaction Endonucleolytic cleavage to 5'-phosphomonoester.. Its function is as follows. Endonuclease that specifically degrades the RNA of RNA-DNA hybrids. This is Ribonuclease HII from Vibrio parahaemolyticus serotype O3:K6 (strain RIMD 2210633).